The primary structure comprises 653 residues: Ran-binding protein 9 (653 aa).

Residues 1-21 show a composition bias toward pro residues; that stretch reads MSGQPPPPPPQQQPPPPPPPA. The disordered stretch occupies residues 1-62; the sequence is MSGQPPPPPP…SAAAPFPHGD (62 aa). Positions 22–57 are enriched in low complexity; the sequence is SAAAPATAPPGLAVGPGPAAGVPVPGLAAGSSAAAP. Residues 72–259 form the B30.2/SPRY domain; the sequence is LQRRLKRLYP…VDANFGQHPF (188 aa). Residues 290-322 enclose the LisH domain; that stretch reads WQTMIQKMVSSYLVHHGYCATAEAFARSTDQTV. Positions 326 to 332 are interaction with CALB1; the sequence is LASIKNR. The CTLH domain maps to 328-385; sequence SIKNRQRIQKLVLAGRMGEAIETTQQLYPSLLERNPNLLFTLKVRQFIEMVNGTDSEV. Lys-330 carries the N6-acetyllysine modification. A disordered region spans residues 386–422; it reads RCLGGRSPKSQDSYPVSPRPFSSPSMSPSHGMSIHSL. Residues 398 to 421 show a composition bias toward low complexity; the sequence is SYPVSPRPFSSPSMSPSHGMSIHS. A phosphoserine mark is found at Ser-402 and Ser-412. The interaction with FMR1 stretch occupies residues 539–653; the sequence is AAIERMIHFG…AFATVEDYLH (115 aa).

It belongs to the RANBP9/10 family. Part of a complex consisting of RANBP9, MKLN1 and GID8. Identified in the CTLH complex that contains GID4, RANBP9 and/or RANBP10, MKLN1, MAEA, RMND5A (or alternatively its paralog RMND5B), GID8, ARMC8, WDR26 and YPEL5. Within this complex, MAEA, RMND5A (or alternatively its paralog RMND5B), GID8, WDR26, and RANBP9 and/or RANBP10 form the catalytic core, while GID4, MKLN1, ARMC8 and YPEL5 have ancillary roles. Interacts with GTP-bound Ran, AR, CDC2L1/p110C, CALB1, S100A7, USP11, SOS1 or SOS2, GID8, and FMR1. Interacts with the Dyrk kinases HIPK2, DYRK1A, and DYRK1B. Interacts with TP73 isoform Alpha but not with TP53. Interacts with the HGF receptor MET and the integrins ITGB1 and ITGB2, but not with ITGAL. Part of a complex consisting of RANBP9, RAN, DYRK1B and COPS5. Directly interacts with RANBP10. Interacts with YPEL5. Interacts with MKLN1. Interacts with DDX4. Interacts with NGFR. Interacts with Tex19.1 and, probably, Tex19.2. In terms of processing, phosphorylated in response to stress. Ubiquitinated. Polyubiquitination targets the protein for rapid degradation via the ubiquitin system. As to expression, ubiquitously expressed, with highest levels in maturating spermatocytes.

Its subcellular location is the cytoplasm. It is found in the cell membrane. It localises to the nucleus. Functionally, may act as scaffolding protein, and as adapter protein to couple membrane receptors to intracellular signaling pathways. Acts as a mediator of cell spreading and actin cytoskeleton rearrangement. Core component of the CTLH E3 ubiquitin-protein ligase complex that selectively accepts ubiquitin from UBE2H and mediates ubiquitination and subsequent proteasomal degradation of the transcription factor HBP1. May be involved in signaling of ITGB2/LFA-1 and other integrins. Enhances HGF-MET signaling by recruiting Sos and activating the Ras pathway. Enhances dihydrotestosterone-induced transactivation activity of AR, as well as dexamethasone-induced transactivation activity of NR3C1, but not affect estrogen-induced transactivation. Stabilizes TP73 isoform Alpha, probably by inhibiting its ubiquitination, and increases its proapoptotic activity. Inhibits the kinase activity of DYRK1A and DYRK1B. Inhibits FMR1 binding to RNA. The protein is Ran-binding protein 9 of Mus musculus (Mouse).